A 477-amino-acid chain; its full sequence is Bifunctional protein HldE (477 aa).

Residues 1–320 form a ribokinase region; it reads MKDSLPAFEK…SLSDTHHSET (320 aa). 195–198 contributes to the ATP binding site; that stretch reads NLHE. Residue D264 is part of the active site. The segment at 346 to 477 is cytidylyltransferase; it reads MTNGCFDILH…KIIENIMANQ (132 aa).

This sequence in the N-terminal section; belongs to the carbohydrate kinase PfkB family. The protein in the C-terminal section; belongs to the cytidylyltransferase family. Homodimer.

The enzyme catalyses D-glycero-beta-D-manno-heptose 7-phosphate + ATP = D-glycero-beta-D-manno-heptose 1,7-bisphosphate + ADP + H(+). The catalysed reaction is D-glycero-beta-D-manno-heptose 1-phosphate + ATP + H(+) = ADP-D-glycero-beta-D-manno-heptose + diphosphate. It functions in the pathway nucleotide-sugar biosynthesis; ADP-L-glycero-beta-D-manno-heptose biosynthesis; ADP-L-glycero-beta-D-manno-heptose from D-glycero-beta-D-manno-heptose 7-phosphate: step 1/4. The protein operates within nucleotide-sugar biosynthesis; ADP-L-glycero-beta-D-manno-heptose biosynthesis; ADP-L-glycero-beta-D-manno-heptose from D-glycero-beta-D-manno-heptose 7-phosphate: step 3/4. In terms of biological role, catalyzes the phosphorylation of D-glycero-D-manno-heptose 7-phosphate at the C-1 position to selectively form D-glycero-beta-D-manno-heptose-1,7-bisphosphate. Its function is as follows. Catalyzes the ADP transfer from ATP to D-glycero-beta-D-manno-heptose 1-phosphate, yielding ADP-D-glycero-beta-D-manno-heptose. The chain is Bifunctional protein HldE from Shewanella piezotolerans (strain WP3 / JCM 13877).